A 72-amino-acid polypeptide reads, in one-letter code: DNA-directed RNA polymerase subunit omega (72 aa).

It belongs to the RNA polymerase subunit omega family. The RNAP catalytic core consists of 2 alpha, 1 beta, 1 beta' and 1 omega subunit. When a sigma factor is associated with the core the holoenzyme is formed, which can initiate transcription.

The catalysed reaction is RNA(n) + a ribonucleoside 5'-triphosphate = RNA(n+1) + diphosphate. Its function is as follows. Promotes RNA polymerase assembly. Latches the N- and C-terminal regions of the beta' subunit thereby facilitating its interaction with the beta and alpha subunits. This chain is DNA-directed RNA polymerase subunit omega, found in Clostridium kluyveri (strain NBRC 12016).